Consider the following 176-residue polypeptide: Cytochrome b (176 aa).

3 helical membrane-spanning segments follow: residues 33-53, 77-98, and 113-133; these read FGSL…FLAM, WLLR…YLHI, and WNVG…GYVL. The heme b site is built by His83 and His97.

Belongs to the cytochrome b family. In terms of assembly, the cytochrome bc1 complex contains 11 subunits: 3 respiratory subunits (MT-CYB, CYC1 and UQCRFS1), 2 core proteins (UQCRC1 and UQCRC2) and 6 low-molecular weight proteins (UQCRH/QCR6, UQCRB/QCR7, UQCRQ/QCR8, UQCR10/QCR9, UQCR11/QCR10 and a cleavage product of UQCRFS1). This cytochrome bc1 complex then forms a dimer. Heme b is required as a cofactor.

Its subcellular location is the mitochondrion inner membrane. Its function is as follows. Component of the ubiquinol-cytochrome c reductase complex (complex III or cytochrome b-c1 complex) that is part of the mitochondrial respiratory chain. The b-c1 complex mediates electron transfer from ubiquinol to cytochrome c. Contributes to the generation of a proton gradient across the mitochondrial membrane that is then used for ATP synthesis. In Eumops glaucinus (Wagner's mastiff bat), this protein is Cytochrome b (MT-CYB).